Here is a 394-residue protein sequence, read N- to C-terminus: Phosphoglycerate kinase (394 aa).

Substrate-binding positions include 21-23 (DFN), Arg-36, 59-62 (HLGR), Arg-118, and Arg-151. Ser-183 is subject to Phosphoserine. ATP-binding residues include Lys-201 and Gly-292. Thr-299 carries the post-translational modification Phosphothreonine. Residues Glu-323 and 350-353 (GGDS) each bind ATP.

The protein belongs to the phosphoglycerate kinase family. As to quaternary structure, monomer.

The protein resides in the cytoplasm. The catalysed reaction is (2R)-3-phosphoglycerate + ATP = (2R)-3-phospho-glyceroyl phosphate + ADP. Its pathway is carbohydrate degradation; glycolysis; pyruvate from D-glyceraldehyde 3-phosphate: step 2/5. This Priestia megaterium (strain DSM 319 / IMG 1521) (Bacillus megaterium) protein is Phosphoglycerate kinase (pgk).